We begin with the raw amino-acid sequence, 362 residues long: Zinc phosphodiesterase ELAC protein 1 (362 aa).

Residues His62, His64, Asp66, His67, His181, Asp252, and His312 each contribute to the Zn(2+) site. Asp66 acts as the Proton acceptor in catalysis.

Belongs to the RNase Z family. In terms of assembly, homodimer. The cofactor is Zn(2+).

Its subcellular location is the cytoplasm. It is found in the cytosol. The protein localises to the nucleus. It catalyses the reaction Endonucleolytic cleavage of RNA, removing extra 3' nucleotides from tRNA precursor, generating 3' termini of tRNAs. A 3'-hydroxy group is left at the tRNA terminus and a 5'-phosphoryl group is left at the trailer molecule.. Zinc phosphodiesterase, which displays some tRNA 3'-processing endonuclease activity. Specifically involved in tRNA repair: acts downstream of the ribosome-associated quality control (RQC) pathway by removing a 2',3'-cyclic phosphate from tRNAs following cleavage by ANKZF1. tRNAs are then processed by TRNT1. The protein is Zinc phosphodiesterase ELAC protein 1 (Elac1) of Mus musculus (Mouse).